Here is an 888-residue protein sequence, read N- to C-terminus: MLSRLFRMHGLFVASHPWEVIVGTVTLTICMMSMNMFTGNNKICGWNYECPKFEEDVLSSDIIILTITRCIAILYIYFQFQNLRQLGSKYILGIAGLFTIFSSFVFSTVVIHFLDKELTGLNEALPFFLLLIDLSRASTLAKFALSSNSQDEVRENIARGMAILGPTFTLDALVECLVIGVGTMSGVRQLEIMCCFGCMSVLANYFVFMTFFPACVSLVLELSRESREGRPIWLLSHFARVLEEEENKPNPVTQRVKMIMSLGLVLVHAHSRWIADPSPQNSTADTSKVSLGLDENVSKRIEPSVSLWQFYLSKMISMDIEQVITLSLALLLAVKYIFFEQTETESTLSLKNPITSPVVTQKKVPDDCCRREPMLVRNNQKCDSVEEETGINRERKVEVIKPLVAETDTPNRATFVVGNSSLLDTSSVLVTQEPEIELPREPRPNEECLQILGNAEKGAKFLSDAEIIQLVIAKHIPAYKLETLMETHERGVSIRRQLLSKKLSEPSSLQYLPYRDYNYSLVMGACCENVIGYMPIPVGVAGPLCLDGKEFQVPMATTEGCLVASTNRGCRAIGLGGGASSRVLADGMTRGPVVRLPRACDSAEVKAWLETSEGFAVIKEAFDSTSRFARLRKLHTSIAGRNLYIRFQSRSGDAMGMNMISKGTEKALSKLHEYFPEMQILAVSGNYCTDKKPAAINWIEGRGKSAVCEAVIPAKVVREVLKTTTEAMIEVNINKNLVGSAMAGSIGGYNAHAANIVTAIYIACGQDAAQNVGSSNCITLMEASGPTNEDLYISCTMPSIEIGTVGGGTNLLPQQACLQMLGVQGACKDNPGENARQLARIVCGTVMAGELSLMAALAAGHLVKSHMIHNRSKINLQDLQGACTKKTA.

Topologically, residues 1–9 are cytoplasmic; the sequence is MLSRLFRMH. Residues 10-39 form a helical membrane-spanning segment; sequence GLFVASHPWEVIVGTVTLTICMMSMNMFTG. Over 40-56 the chain is Lumenal; that stretch reads NNKICGWNYECPKFEED. A helical membrane pass occupies residues 57–78; it reads VLSSDIIILTITRCIAILYIYF. In terms of domain architecture, SSD spans 61-218; the sequence is DIIILTITRC…MTFFPACVSL (158 aa). The INSIG-binding motif signature appears at 75-78; that stretch reads YIYF. Over 79–89 the chain is Cytoplasmic; the sequence is QFQNLRQLGSK. A Glycyl lysine isopeptide (Lys-Gly) (interchain with G-Cter in ubiquitin) cross-link involves residue Lys-89. Residues 90 to 114 form a helical membrane-spanning segment; sequence YILGIAGLFTIFSSFVFSTVVIHFL. Residues 115 to 123 lie on the Lumenal side of the membrane; it reads DKELTGLNE. The helical transmembrane segment at 124-149 threads the bilayer; that stretch reads ALPFFLLLIDLSRASTLAKFALSSNS. The Cytoplasmic portion of the chain corresponds to 150–159; it reads QDEVRENIAR. The helical transmembrane segment at 160–187 threads the bilayer; it reads GMAILGPTFTLDALVECLVIGVGTMSGV. At 188–191 the chain is on the lumenal side; that stretch reads RQLE. A helical membrane pass occupies residues 192–220; it reads IMCCFGCMSVLANYFVFMTFFPACVSLVL. Over 221-248 the chain is Cytoplasmic; sequence ELSRESREGRPIWLLSHFARVLEEEENK. Residue Lys-248 forms a Glycyl lysine isopeptide (Lys-Gly) (interchain with G-Cter in ubiquitin) linkage. The chain crosses the membrane as a helical span at residues 249–275; the sequence is PNPVTQRVKMIMSLGLVLVHAHSRWIA. Residues 276–314 are Lumenal-facing; the sequence is DPSPQNSTADTSKVSLGLDENVSKRIEPSVSLWQFYLSK. N-linked (GlcNAc...) asparagine glycans are attached at residues Asn-281 and Asn-296. Residues 315–339 form a helical membrane-spanning segment; sequence MISMDIEQVITLSLALLLAVKYIFF. Over 340–888 the chain is Cytoplasmic; it reads EQTETESTLS…LQGACTKKTA (549 aa). Catalysis depends on charge relay system residues Glu-559, Lys-691, and Asp-767. The active-site Proton donor is the His-866. Ser-872 is subject to Phosphoserine; by AMPK.

Belongs to the HMG-CoA reductase family. Homotetramer. Homodimer. Interacts (via its SSD) with INSIG1; the interaction, accelerated by sterols, leads to the recruitment of HMGCR to AMFR/gp78 for its ubiquitination by the sterol-mediated ERAD pathway. Interacts with UBIAD1. Undergoes sterol-mediated ubiquitination and ER-associated degradation (ERAD). Accumulation of sterols in the endoplasmic reticulum (ER) membrane, triggers binding of the reductase to the ER membrane protein INSIG1 or INSIG2. The INSIG1 binding leads to the recruitment of the ubiquitin ligase, AMFR/gp78, RNF139 or RNF145, initiating ubiquitination of the reductase. The ubiquitinated reductase is then extracted from the ER membrane and delivered to cytosolic 26S proteosomes by a mechanism probably mediated by the ATPase Valosin-containing protein VCP/p97. The INSIG2-binding leads to the recruitment of the ubiquitin ligase RNF139, initiating ubiquitination of the reductase. Lys-248 is the main site of ubiquitination. Ubiquitination is enhanced by the presence of a geranylgeranylated protein. Post-translationally, N-glycosylated. Deglycosylated by NGLY1 on release from the endoplasmic reticulum (ER) in a sterol-mediated manner. In terms of processing, phosphorylated. Phosphorylation at Ser-872 reduces the catalytic activity.

Its subcellular location is the endoplasmic reticulum membrane. The protein resides in the peroxisome membrane. It catalyses the reaction (R)-mevalonate + 2 NADP(+) + CoA = (3S)-3-hydroxy-3-methylglutaryl-CoA + 2 NADPH + 2 H(+). It participates in metabolic intermediate biosynthesis; (R)-mevalonate biosynthesis; (R)-mevalonate from acetyl-CoA: step 3/3. Regulated by a negative feedback mechanism through sterols and non-sterol metabolites derived from mevalonate. Phosphorylation at Ser-872 down-regulates the catalytic activity. Catalyzes the conversion of (3S)-hydroxy-3-methylglutaryl-CoA (HMG-CoA) to mevalonic acid, the rate-limiting step in the synthesis of cholesterol and other isoprenoids, thus plays a critical role in cellular cholesterol homeostasis. This chain is 3-hydroxy-3-methylglutaryl-coenzyme A reductase (HMGCR), found in Pongo abelii (Sumatran orangutan).